Here is a 295-residue protein sequence, read N- to C-terminus: Replication-associated protein A (295 aa).

The segment at methionine 1–glutamate 31 is disordered. The CRESS-DNA virus Rep endonuclease domain occupies serine 35–phenylalanine 138. The short motif at phenylalanine 42–tyrosine 45 is the RCR-1 element. Glutamate 76, histidine 84, and histidine 86 together coordinate a divalent metal cation. The RCR-2 signature appears at histidine 84 to histidine 86. Tyrosine 124 acts as the For DNA cleavage activity in catalysis. The short motif at tyrosine 124–lysine 127 is the RCR-3 element. An oligomerization region spans residues serine 192–tyrosine 204.

Belongs to the geminiviridae Rep protein family. In terms of assembly, homooligomer. Part of the C- and V-complexes which are RepA-Rep-DNA complexes involved in the c-sense and v-sense transcription.

Its subcellular location is the host nucleus. The protein resides in the host cytoplasm. Functionally, implicated in enhancement of V-sense gene expression. Acts a an inhibitor of C-sense gene transcription. The polypeptide is Replication-associated protein A (Avena sativa (Oat)).